We begin with the raw amino-acid sequence, 1680 residues long: Sodium channel protein type 7 subunit alpha (1680 aa).

Topologically, residues 1–117 (MLTSPEPKGL…RRAVIKVLVH (117 aa)) are cytoplasmic. The stretch at 100-401 (TLSPLSSLRR…ILTMAYEQEK (302 aa)) is one I repeat. A helical transmembrane segment spans residues 118 to 137 (PLFRLLILISVLTDSILMCM). The Extracellular portion of the chain corresponds to 138–141 (SNLP). The chain crosses the membrane as a helical span at residues 142–167 (EWILAVENTLLGIYTFEILVKVIARG). At 168-178 (IWAGSFSFLGD) the chain is on the cytoplasmic side. The chain crosses the membrane as a helical span at residues 179–196 (LWNWLDFSVTLFELITRS). The Extracellular portion of the chain corresponds to 197 to 200 (SPLS). Residues 201–219 (SLPMFKTIRTLRILKIIPL) traverse the membrane as a helical segment. The Cytoplasmic portion of the chain corresponds to 220–237 (NHGLQSIVVTLVQCLKKL). Residues 238–259 (LGAIALALFFLTVSSLFGMGLF) form a helical membrane-spanning segment. The Extracellular segment spans residues 260 to 338 (MGNLKHKCVR…PDNGFTSFDN (79 aa)). Cysteine 267 and cysteine 307 form a disulfide bridge. 2 N-linked (GlcNAc...) asparagine glycosylation sites follow: asparagine 281 and asparagine 309. Positions 339 to 366 (FGWALLAMFRLMTQDYPELLYHQILYAS) form an intramembrane region, pore-forming. Glycine 367 is a topological domain (extracellular). The chain crosses the membrane as a helical span at residues 368–407 (KIYMIFFVLISFWFAFYMASLFLGILTMAYEQEKQRASEE). At 408–505 (SRDMDSKCHQ…EFADRIITHP (98 aa)) the chain is on the cytoplasmic side. Residues 487 to 756 (CSPCWIKLNE…QLAVAWIKMV (270 aa)) form an II repeat. Residues 506–521 (LFDLFLVICIILNICF) form a helical membrane-spanning segment. The Extracellular portion of the chain corresponds to 522-530 (LALEHFPMS). A helical membrane pass occupies residues 531-559 (EELMSLLAIGNLVFIGIYTIEMILKIIAM). The Cytoplasmic segment spans residues 560-568 (HPYGYFQIS). The helical transmembrane segment at 569-586 (WHIFDSILVVLGLTEMLL) threads the bilayer. At 587–592 (ADIEEI) the chain is on the extracellular side. The chain crosses the membrane as a helical span at residues 593–608 (TVFILVPLIFIKLGKY). Residues 609-625 (APPFKNLMRILGRALVA) lie on the Cytoplasmic side of the membrane. A helical membrane pass occupies residues 626-654 (LKDLVLLVSIFIYFSAVFGMKLFGRSYKD). Residues 655 to 672 (CVCHVDQDCQRQRWHMSD) are Extracellular-facing. Cystine bridges form between cysteine 657–cysteine 663 and cysteine 695–cysteine 704. The pore-forming intramembrane region spans 673–699 (FLHAYVTVFRILCGEWIETLWECMEVA). Residue glycine 700 is a topological domain, extracellular. Residues 701 to 731 (EAWCIPFYMMVILIGNLLILYLFVALVSSFA) form a helical membrane-spanning segment. Residues 732–933 (SYDATTEVSK…KTCCKIVENS (202 aa)) are Cytoplasmic-facing. Residues 807–833 (DQSSGTEKTPVTESESQSLIASPSVSE) are compositionally biased toward polar residues. The disordered stretch occupies residues 807–874 (DQSSGTEKTP…MKQSSSSECS (68 aa)). Serine 842 carries the phosphoserine modification. One copy of the III repeat lies at 915–1223 (NGKIWRNIRK…KKQYRALKKL (309 aa)). The helical transmembrane segment at 934 to 952 (WFECFIGLVTLLCTGTLAL) threads the bilayer. Residues 953–960 (EDIYIDQR) are Extracellular-facing. A helical transmembrane segment spans residues 961–989 (KTIKIFLEYGDMIFAYIFILEMLLKWVAY). Topologically, residues 990-997 (GFKAYFSN) are cytoplasmic. The helical transmembrane segment at 998–1019 (NWYKLDFMVVIVLCLSLIGKTR) threads the bilayer. Position 1020 (glutamate 1020) is a topological domain, extracellular. The helical transmembrane segment at 1021–1039 (DLNPLASIKFLRALRVLSQ) threads the bilayer. The Cytoplasmic segment spans residues 1040 to 1054 (FERMKVVLRALIKTT). Residues 1055–1079 (LPAVSVFLVCLMIWLLFSVMGVFLF) traverse the membrane as a helical segment. The Extracellular portion of the chain corresponds to 1080–1126 (AGKFYECIDPTRGERFSVFEVMNKSQCENLVFNESMPWENAKLNFDN). A disulfide bridge connects residues cysteine 1086 and cysteine 1106. Residues asparagine 1102 and asparagine 1112 are each glycosylated (N-linked (GlcNAc...) asparagine). The pore-forming intramembrane region spans 1127 to 1153 (VGNGFLSLFQVATFNGWISIMNSAIDS). Over 1154 to 1166 (VGVYMQPSFEHSL) the chain is Extracellular. A helical transmembrane segment spans residues 1167–1201 (HMYTYFIIFVVFGLFLPLCMLIGVIIRNFNKQKIK). Topologically, residues 1202 to 1249 (QGGSNIFITVKQKKQYRALKKLLYADSQKPAARPRNKFQGFICDVVTH) are cytoplasmic. The IV repeat unit spans residues 1232 to 1530 (AARPRNKFQG…WNRFDPDRTQ (299 aa)). Residues 1250 to 1271 (RVFNVIIILLICFQATTIMIQN) form a helical membrane-spanning segment. Topologically, residues 1272–1275 (DEQS) are extracellular. Residues 1276-1304 (PQIETAVFWMNSLFTMLFTLECILKLTAF) traverse the membrane as a helical segment. Topologically, residues 1305–1311 (RCHYFTS) are cytoplasmic. Residues 1312–1337 (AWNVHDFMVVVFSITGLLLPLSIGQY) form a helical membrane-spanning segment. Topologically, residues 1338 to 1340 (FVP) are extracellular. The helical transmembrane segment at 1341 to 1361 (PSLVQLLLLSRIIHVLRPGKG) threads the bilayer. Residues 1362–1376 (PKVFHDLMLPLMLSL) lie on the Cytoplasmic side of the membrane. A helical membrane pass occupies residues 1377–1401 (PALLNIALLIFLVMFIYAIFGMYNF). Residues 1402-1419 (AYVKKEAGINDVSNFETF) are Extracellular-facing. Positions 1420 to 1443 (GSSMLCLFQVTTFSGWDGMLDAIF) form an intramembrane region, pore-forming. Topologically, residues 1444–1467 (NSQWSDCDPDKINPGTQVRGDCGS) are extracellular. An intrachain disulfide couples cysteine 1450 to cysteine 1465. Residues 1468–1503 (PSVGIFYFVSYILISWLIIVNMYVVLIMEFLSIPSK) traverse the membrane as a helical segment. Residues 1504–1680 (RKNRTLSEDD…EEKASIQTQI (177 aa)) are Cytoplasmic-facing. A disordered region spans residues 1646 to 1680 (KIQDIPEIDDGREDPNSKGVHSGQIEEKASIQTQI).

The protein belongs to the sodium channel (TC 1.A.1.10) family. SCN7A subfamily. As to quaternary structure, the sodium channel formed by SCN7A is probably a heterooligomeric complex consisting of the ion conducting pore forming alpha subunit SCN7A and regulatory beta subunits such as SCN3B. Interacts with ATP1A1; activates ATP1A1 and thereby indirectly signals to nearby neurons to regulate sodium homeostasis. Not tissue specific but widely expressed.

The protein resides in the cell membrane. The catalysed reaction is Na(+)(in) = Na(+)(out). Its function is as follows. Sodium leak channel functioning as an osmosensor regulating sodium ion levels in various tissues and organs. While most sodium channels are voltage-gated, SCN7A is not and lets sodium flow through membrane along its concentration gradient. In glial cells of the central nervous system, senses body-fluid sodium levels and controls salt intake behavior as well as voluntary water intake through activation of nearby neurons to maintain appropriate sodium levels in the body. By mediating sodium influx into keratinocytes, also plays a role in skin barrier homeostasis. The polypeptide is Sodium channel protein type 7 subunit alpha (Rattus norvegicus (Rat)).